A 169-amino-acid polypeptide reads, in one-letter code: Lipoprotein signal peptidase (169 aa).

The next 4 membrane-spanning stretches (helical) occupy residues 10-30 (LPWL…KAFF), 41-61 (VVIP…AFSF), 68-88 (WQRW…VVWL), and 94-114 (GETW…GNLY). Catalysis depends on residues Asp-124 and Asp-143. The helical transmembrane segment at 135–155 (YFPAFNLADSAITVGAVMLAL) threads the bilayer.

The protein belongs to the peptidase A8 family.

It localises to the cell inner membrane. It catalyses the reaction Release of signal peptides from bacterial membrane prolipoproteins. Hydrolyzes -Xaa-Yaa-Zaa-|-(S,diacylglyceryl)Cys-, in which Xaa is hydrophobic (preferably Leu), and Yaa (Ala or Ser) and Zaa (Gly or Ala) have small, neutral side chains.. It participates in protein modification; lipoprotein biosynthesis (signal peptide cleavage). In terms of biological role, this protein specifically catalyzes the removal of signal peptides from prolipoproteins. The polypeptide is Lipoprotein signal peptidase (Pseudomonas paraeruginosa (strain DSM 24068 / PA7) (Pseudomonas aeruginosa (strain PA7))).